Here is a 180-residue protein sequence, read N- to C-terminus: Large ribosomal subunit protein uL5 (180 aa).

The protein belongs to the universal ribosomal protein uL5 family. As to quaternary structure, part of the 50S ribosomal subunit; part of the 5S rRNA/L5/L18/L25 subcomplex. Contacts the 5S rRNA and the P site tRNA. Forms a bridge to the 30S subunit in the 70S ribosome.

In terms of biological role, this is one of the proteins that bind and probably mediate the attachment of the 5S RNA into the large ribosomal subunit, where it forms part of the central protuberance. In the 70S ribosome it contacts protein S13 of the 30S subunit (bridge B1b), connecting the 2 subunits; this bridge is implicated in subunit movement. Contacts the P site tRNA; the 5S rRNA and some of its associated proteins might help stabilize positioning of ribosome-bound tRNAs. This chain is Large ribosomal subunit protein uL5, found in Moorella thermoacetica (strain ATCC 39073 / JCM 9320).